Consider the following 427-residue polypeptide: Enolase (427 aa).

(2R)-2-phosphoglycerate is bound at residue Q163. The Proton donor role is filled by E205. Mg(2+) is bound by residues D242, E285, and D312. Residues K337, R366, S367, and K388 each coordinate (2R)-2-phosphoglycerate. Residue K337 is the Proton acceptor of the active site.

It belongs to the enolase family. The cofactor is Mg(2+).

It is found in the cytoplasm. Its subcellular location is the secreted. The protein localises to the cell surface. It catalyses the reaction (2R)-2-phosphoglycerate = phosphoenolpyruvate + H2O. Its pathway is carbohydrate degradation; glycolysis; pyruvate from D-glyceraldehyde 3-phosphate: step 4/5. Its function is as follows. Catalyzes the reversible conversion of 2-phosphoglycerate (2-PG) into phosphoenolpyruvate (PEP). It is essential for the degradation of carbohydrates via glycolysis. In Polaromonas sp. (strain JS666 / ATCC BAA-500), this protein is Enolase.